The following is a 77-amino-acid chain: Protein OPG128 (77 aa).

Belongs to the orthopoxvirus OPG128 family. Interacts with sulfhydryl oxidase OPG072; this interaction involves formation of a transient disulfide-bonded intermediate, allowing disulfide bond transfer. Interacts with OPG088; this interaction involves formation of a transient disulfide-bonded intermediate, allowing disulfide bond transfer.

In terms of biological role, late protein which probably participates in disulfide bond formation by functioning as a thiol-disulfide transfer protein between membrane-associated OPG072 and OPG08. The complete pathway for formation of disulfide bonds in intracellular virion membrane proteins sequentially involves oxidation of OPG072, OPG128 and OPG08. In Monkeypox virus, this protein is Protein OPG128 (OPG128).